Here is a 178-residue protein sequence, read N- to C-terminus: CASP-like protein 5A1 (178 aa).

Residues 1–24 form a disordered region; sequence MFASRPAVHPVEAPPPTDPVEQPT. Topologically, residues 1–37 are cytoplasmic; the sequence is MFASRPAVHPVEAPPPTDPVEQPTGVLMKDLPGMPGT. The chain crosses the membrane as a helical span at residues 38-58; it reads AGGLGLRVAQFVFAGVALAVM. Residues 59–69 are Extracellular-facing; the sequence is ASTSDFPSVTA. A helical transmembrane segment spans residues 70–90; that stretch reads FCYLVAATIMQCLWSFSLAIV. At 91 to 105 the chain is on the cytoplasmic side; it reads DIYALLVKRCLRNRR. A helical transmembrane segment spans residues 106 to 126; that stretch reads AVCLFAIGDGITAALTFGAAC. The Extracellular segment spans residues 127-152; that stretch reads SSAGITVLIDNDLNICAENHCGSFKT. Residues 153–173 traverse the membrane as a helical segment; the sequence is ATALAFMSWFALTPSFLLNFW. The Cytoplasmic segment spans residues 174–178; the sequence is SMAAR.

It belongs to the Casparian strip membrane proteins (CASP) family. In terms of assembly, homodimer and heterodimers.

The protein resides in the cell membrane. The polypeptide is CASP-like protein 5A1 (Brachypodium distachyon (Purple false brome)).